A 102-amino-acid chain; its full sequence is Small ribosomal subunit protein uS10 (102 aa).

This sequence belongs to the universal ribosomal protein uS10 family. Part of the 30S ribosomal subunit.

In terms of biological role, involved in the binding of tRNA to the ribosomes. This Salinispora tropica (strain ATCC BAA-916 / DSM 44818 / JCM 13857 / NBRC 105044 / CNB-440) protein is Small ribosomal subunit protein uS10.